A 209-amino-acid chain; its full sequence is NAD(P)H-quinone oxidoreductase subunit K 2 (209 aa).

Positions 53, 54, 118, and 149 each coordinate [4Fe-4S] cluster.

Belongs to the complex I 20 kDa subunit family. As to quaternary structure, NDH-1 can be composed of about 15 different subunits; different subcomplexes with different compositions have been identified which probably have different functions. [4Fe-4S] cluster is required as a cofactor.

The protein localises to the cellular thylakoid membrane. It catalyses the reaction a plastoquinone + NADH + (n+1) H(+)(in) = a plastoquinol + NAD(+) + n H(+)(out). It carries out the reaction a plastoquinone + NADPH + (n+1) H(+)(in) = a plastoquinol + NADP(+) + n H(+)(out). In terms of biological role, NDH-1 shuttles electrons from an unknown electron donor, via FMN and iron-sulfur (Fe-S) centers, to quinones in the respiratory and/or the photosynthetic chain. The immediate electron acceptor for the enzyme in this species is believed to be plastoquinone. Couples the redox reaction to proton translocation, and thus conserves the redox energy in a proton gradient. Cyanobacterial NDH-1 also plays a role in inorganic carbon-concentration. This chain is NAD(P)H-quinone oxidoreductase subunit K 2, found in Acaryochloris marina (strain MBIC 11017).